Here is a 722-residue protein sequence, read N- to C-terminus: ORC ubiquitin ligase 1 (722 aa).

The RING-type; degenerate zinc-finger motif lies at 18–56 (CHICLGKVRQPVVCTNNHVFCSICIDLWLKNNSQCPACR). 2 coiled-coil regions span residues 87–129 (LRKT…TILD) and 157–267 (VVEW…KEDV). Position 210 is a phosphoserine (Ser210). The interval 273–359 (RAPSADSKGP…RLGARETPMD (87 aa)) is disordered. The span at 302-319 (AGSASASHLASPSSSRLA) shows a compositional bias: low complexity. A compositionally biased stretch (polar residues) spans 323 to 338 (SVRQESTSRTEPNCPQ). The span at 339 to 359 (NKDRYPKPTEPRLGARETPMD) shows a compositional bias: basic and acidic residues. 5 positions are modified to phosphoserine: Ser522, Ser549, Ser557, Ser564, and Ser566. Positions 541-555 (MSESDNSKSPCNNGF) are enriched in polar residues. Disordered stretches follow at residues 541–585 (MSES…GSKL) and 691–722 (VPEK…ATKS). The span at 571–581 (EFLEEPDKLQE) shows a compositional bias: basic and acidic residues. Residues 698–722 (NGNQSTKRKIQSSLANASPSKATKS) are compositionally biased toward polar residues. 2 positions are modified to phosphoserine: Ser715 and Ser717.

Associates with ORC complex. Binds to chromatin; association is cell cycle-regulated, absent from mitotic chromosomes, is associated with chromatin from G1 and partially released from chromatin from mid S-phase. Auto-ubiquitinated.

Its subcellular location is the chromosome. It carries out the reaction S-ubiquitinyl-[E2 ubiquitin-conjugating enzyme]-L-cysteine + [acceptor protein]-L-lysine = [E2 ubiquitin-conjugating enzyme]-L-cysteine + N(6)-ubiquitinyl-[acceptor protein]-L-lysine.. E3 ubiquitin ligase essential for DNA replication origin activation during S phase. Acts as a replication origin selector which selects the origins to be fired and catalyzes the multi-mono-ubiquitination of a subset of chromatin-bound ORC3 and ORC5 during S-phase. This Mus musculus (Mouse) protein is ORC ubiquitin ligase 1.